A 90-amino-acid polypeptide reads, in one-letter code: Small ribosomal subunit protein uS15c (90 aa).

The protein belongs to the universal ribosomal protein uS15 family. As to quaternary structure, part of the 30S ribosomal subunit.

The protein localises to the plastid. In Cuscuta reflexa (Southern Asian dodder), this protein is Small ribosomal subunit protein uS15c (rps15).